The sequence spans 384 residues: 1-deoxy-D-xylulose 5-phosphate reductoisomerase (384 aa).

Residues Thr-10, Gly-11, Ser-12, Ile-13, Gly-36, Asn-38, and Asn-122 each coordinate NADPH. A 1-deoxy-D-xylulose 5-phosphate-binding site is contributed by Lys-123. Glu-124 is an NADPH binding site. Residue Asp-148 coordinates Mn(2+). Positions 149, 150, 174, and 197 each coordinate 1-deoxy-D-xylulose 5-phosphate. Residue Glu-150 coordinates Mn(2+). Position 203 (Gly-203) interacts with NADPH. 1-deoxy-D-xylulose 5-phosphate-binding residues include Ser-210, Asn-215, Lys-216, and Glu-219. Residue Glu-219 coordinates Mn(2+).

Belongs to the DXR family. Requires Mg(2+) as cofactor. Mn(2+) serves as cofactor.

The enzyme catalyses 2-C-methyl-D-erythritol 4-phosphate + NADP(+) = 1-deoxy-D-xylulose 5-phosphate + NADPH + H(+). It functions in the pathway isoprenoid biosynthesis; isopentenyl diphosphate biosynthesis via DXP pathway; isopentenyl diphosphate from 1-deoxy-D-xylulose 5-phosphate: step 1/6. In terms of biological role, catalyzes the NADPH-dependent rearrangement and reduction of 1-deoxy-D-xylulose-5-phosphate (DXP) to 2-C-methyl-D-erythritol 4-phosphate (MEP). This chain is 1-deoxy-D-xylulose 5-phosphate reductoisomerase, found in Geotalea daltonii (strain DSM 22248 / JCM 15807 / FRC-32) (Geobacter daltonii).